The sequence spans 297 residues: Syntaxin-4 (297 aa).

Positions 1–12 (MRDRTHELRQGD) are enriched in basic and acidic residues. Residues 1-21 (MRDRTHELRQGDDSSDDEDKE) are disordered. The Cytoplasmic segment spans residues 1 to 275 (MRDRTHELRQ…QKKARKKKVF (275 aa)). A phosphoserine mark is found at Ser14 and Ser15. The residue at position 31 (Thr31) is a Phosphothreonine. 4 positions are modified to phosphoserine: Ser36, Ser117, Ser208, and Ser248. A coiled-coil region spans residues 43-163 (QKVRTIRQTI…ERIRRQLKIT (121 aa)). The t-SNARE coiled-coil homology domain occupies 200-262 (LNEISARHSE…ERGQEHVKVA (63 aa)). A helical; Anchor for type IV membrane protein membrane pass occupies residues 276–296 (IAICLSITVLILVVIIVISTL). Position 297 (Val297) is a topological domain, extracellular.

It belongs to the syntaxin family. In terms of assembly, component of the SNARE complex composed of STX4, SNAP23 and VAMP7 that interacts with SYT7 during lysosomal exocytosis. Found in a complex with VAMP8 and SNAP23. Detected in a complex with SNAP23 and STXBP4. Interacts with VAMP2. Interacts with SNAP23 and SNAPIN. Interacts with LLGL1. Interacts (via C-terminus) with CENPF. Interacts with DOC2B. Interacts with STXBP6. Interacts with STXBP3; excludes interaction with DOC2B and SNAP25. Interacts with STXBP4; excludes interaction with VAMP2. Interacts with STXBP5L.

Its subcellular location is the cell membrane. It is found in the cell projection. It localises to the neuron projection. The protein resides in the stereocilium. Plasma membrane t-SNARE that mediates docking of transport vesicles. Necessary for the translocation of SLC2A4 from intracellular vesicles to the plasma membrane. In neurons, recruited at neurite tips to membrane domains rich in the phospholipid 1-oleoyl-2-palmitoyl-PC (OPPC) which promotes neurite tip surface expression of the dopamine transporter SLC6A3/DAT by facilitating fusion of SLC6A3-containing transport vesicles with the plasma membrane. Together with STXB3 and VAMP2, may also play a role in docking/fusion of intracellular GLUT4-containing vesicles with the cell surface in adipocytes and in docking of synaptic vesicles at presynaptic active zones. Required for normal hearing. The protein is Syntaxin-4 (STX4) of Bos taurus (Bovine).